Consider the following 264-residue polypeptide: S-adenosylmethionine decarboxylase proenzyme (264 aa).

The Schiff-base intermediate with substrate; via pyruvic acid role is filled by serine 112. The residue at position 112 (serine 112) is a Pyruvic acid (Ser); by autocatalysis. The active-site Proton acceptor; for processing activity is histidine 117. The active-site Proton donor; for catalytic activity is the cysteine 140.

It belongs to the prokaryotic AdoMetDC family. Type 2 subfamily. Heterooctamer of four alpha and four beta chains arranged as a tetramer of alpha/beta heterodimers. Requires pyruvate as cofactor. Post-translationally, is synthesized initially as an inactive proenzyme. Formation of the active enzyme involves a self-maturation process in which the active site pyruvoyl group is generated from an internal serine residue via an autocatalytic post-translational modification. Two non-identical subunits are generated from the proenzyme in this reaction, and the pyruvate is formed at the N-terminus of the alpha chain, which is derived from the carboxyl end of the proenzyme. The post-translation cleavage follows an unusual pathway, termed non-hydrolytic serinolysis, in which the side chain hydroxyl group of the serine supplies its oxygen atom to form the C-terminus of the beta chain, while the remainder of the serine residue undergoes an oxidative deamination to produce ammonia and the pyruvoyl group blocking the N-terminus of the alpha chain.

It carries out the reaction S-adenosyl-L-methionine + H(+) = S-adenosyl 3-(methylsulfanyl)propylamine + CO2. It functions in the pathway amine and polyamine biosynthesis; S-adenosylmethioninamine biosynthesis; S-adenosylmethioninamine from S-adenosyl-L-methionine: step 1/1. In terms of biological role, catalyzes the decarboxylation of S-adenosylmethionine to S-adenosylmethioninamine (dcAdoMet), the propylamine donor required for the synthesis of the polyamines spermine and spermidine from the diamine putrescine. The sequence is that of S-adenosylmethionine decarboxylase proenzyme from Escherichia coli O45:K1 (strain S88 / ExPEC).